A 258-amino-acid polypeptide reads, in one-letter code: Acetylglutamate kinase (258 aa).

Substrate-binding positions include 41-42 (GG), R63, and N156.

The protein belongs to the acetylglutamate kinase family. ArgB subfamily.

It localises to the cytoplasm. It catalyses the reaction N-acetyl-L-glutamate + ATP = N-acetyl-L-glutamyl 5-phosphate + ADP. It participates in amino-acid biosynthesis; L-arginine biosynthesis; N(2)-acetyl-L-ornithine from L-glutamate: step 2/4. Functionally, catalyzes the ATP-dependent phosphorylation of N-acetyl-L-glutamate. This is Acetylglutamate kinase from Bacillus velezensis (strain DSM 23117 / BGSC 10A6 / LMG 26770 / FZB42) (Bacillus amyloliquefaciens subsp. plantarum).